The following is a 472-amino-acid chain: 3-isopropylmalate dehydratase large subunit (472 aa).

[4Fe-4S] cluster-binding residues include C347, C407, and C410.

This sequence belongs to the aconitase/IPM isomerase family. LeuC type 1 subfamily. In terms of assembly, heterodimer of LeuC and LeuD. It depends on [4Fe-4S] cluster as a cofactor.

The enzyme catalyses (2R,3S)-3-isopropylmalate = (2S)-2-isopropylmalate. It participates in amino-acid biosynthesis; L-leucine biosynthesis; L-leucine from 3-methyl-2-oxobutanoate: step 2/4. Functionally, catalyzes the isomerization between 2-isopropylmalate and 3-isopropylmalate, via the formation of 2-isopropylmaleate. The protein is 3-isopropylmalate dehydratase large subunit of Synechococcus sp. (strain CC9902).